A 940-amino-acid chain; its full sequence is Isoleucine--tRNA ligase (940 aa).

A 'HIGH' region motif is present at residues 58–68; it reads PYANGDIHIGH. E564 lines the L-isoleucyl-5'-AMP pocket. The short motif at 605 to 609 is the 'KMSKS' region element; that stretch reads KMSKS. K608 lines the ATP pocket. Positions 903, 906, 923, and 926 each coordinate Zn(2+).

Belongs to the class-I aminoacyl-tRNA synthetase family. IleS type 1 subfamily. Monomer. The cofactor is Zn(2+).

The protein localises to the cytoplasm. It catalyses the reaction tRNA(Ile) + L-isoleucine + ATP = L-isoleucyl-tRNA(Ile) + AMP + diphosphate. Its function is as follows. Catalyzes the attachment of isoleucine to tRNA(Ile). As IleRS can inadvertently accommodate and process structurally similar amino acids such as valine, to avoid such errors it has two additional distinct tRNA(Ile)-dependent editing activities. One activity is designated as 'pretransfer' editing and involves the hydrolysis of activated Val-AMP. The other activity is designated 'posttransfer' editing and involves deacylation of mischarged Val-tRNA(Ile). This Shewanella halifaxensis (strain HAW-EB4) protein is Isoleucine--tRNA ligase.